Here is a 466-residue protein sequence, read N- to C-terminus: Ribulose bisphosphate carboxylase large chain (466 aa).

The residue at position 4 (Lys-4) is an N6,N6,N6-trimethyllysine. 2 residues coordinate substrate: Asn-113 and Thr-163. Lys-165 (proton acceptor) is an active-site residue. Lys-167 serves as a coordination point for substrate. The Mg(2+) site is built by Lys-191, Asp-193, and Glu-194. Lys-191 bears the N6-carboxylysine mark. His-284 acts as the Proton acceptor in catalysis. The substrate site is built by Arg-285, His-317, and Ser-369.

This sequence belongs to the RuBisCO large chain family. Type I subfamily. Heterohexadecamer of 8 large chains and 8 small chains; disulfide-linked. The disulfide link is formed within the large subunit homodimers. Requires Mg(2+) as cofactor. The disulfide bond which can form in the large chain dimeric partners within the hexadecamer appears to be associated with oxidative stress and protein turnover.

It localises to the plastid. The protein resides in the chloroplast. The catalysed reaction is 2 (2R)-3-phosphoglycerate + 2 H(+) = D-ribulose 1,5-bisphosphate + CO2 + H2O. It catalyses the reaction D-ribulose 1,5-bisphosphate + O2 = 2-phosphoglycolate + (2R)-3-phosphoglycerate + 2 H(+). In terms of biological role, ruBisCO catalyzes two reactions: the carboxylation of D-ribulose 1,5-bisphosphate, the primary event in carbon dioxide fixation, as well as the oxidative fragmentation of the pentose substrate in the photorespiration process. Both reactions occur simultaneously and in competition at the same active site. This is Ribulose bisphosphate carboxylase large chain from Barleria prionitis (Porcupine flower).